The chain runs to 268 residues: Protein atz-1 (268 aa).

A coiled-coil region spans residues 171-243 (VDDANKLTEV…EEGEEDYEEE (73 aa)). A disordered region spans residues 229–268 (DLMKEEEGEEDYEEEENYEVEEDFEDEEEYDEEGEEEDYE). Residues 231–268 (MKEEEGEEDYEEEENYEVEEDFEDEEEYDEEGEEEDYE) are compositionally biased toward acidic residues.

The protein resides in the nucleus. Plays a role in meiosis, germline development and oocyte morphogenesis. May play a role in DNA replication. In the germline, involved in the maintenance of transition zone nuclei and in chromosome structure and organization, but not required for mitotic proliferation. This chain is Protein atz-1, found in Caenorhabditis elegans.